A 312-amino-acid chain; its full sequence is Ribosomal protein L11 methyltransferase (312 aa).

Positions 160, 181, 203, and 246 each coordinate S-adenosyl-L-methionine.

The protein belongs to the methyltransferase superfamily. PrmA family.

The protein resides in the cytoplasm. It carries out the reaction L-lysyl-[protein] + 3 S-adenosyl-L-methionine = N(6),N(6),N(6)-trimethyl-L-lysyl-[protein] + 3 S-adenosyl-L-homocysteine + 3 H(+). Its function is as follows. Methylates ribosomal protein L11. The polypeptide is Ribosomal protein L11 methyltransferase (Staphylococcus aureus (strain USA300)).